The following is a 114-amino-acid chain: Small ribosomal subunit protein uS13m (114 aa).

The interval Asp-92–Lys-114 is disordered.

This sequence belongs to the universal ribosomal protein uS13 family. As to quaternary structure, part of the small ribosomal subunit.

It localises to the mitochondrion. In terms of biological role, located at the top of the head of the small subunit, it contacts several helices of the 18S rRNA. The protein is Small ribosomal subunit protein uS13m (RPS13) of Oenothera berteroana (Bertero's evening primrose).